The primary structure comprises 494 residues: DDB1- and CUL4-associated factor 4 (494 aa).

Residues 1–65 are disordered; that stretch reads MHQSSWKSRR…AGSSSVPDLP (65 aa). Over residues 7–20 the composition is skewed to basic residues; it reads KSRRHRRRGHRHSA. The span at 51–60 shows a compositional bias: low complexity; it reads STSSTAGSSS. WD repeat units lie at residues 367-406 and 409-450; these read FHDSAVTSVQILQEEQCLMASDMAGTIKLWDLRTTKCIRQ and GHVN…LLRT.

As to quaternary structure, interacts with DDB1 and CUL4A.

It functions in the pathway protein modification; protein ubiquitination. May function as a substrate receptor for CUL4-DDB1 E3 ubiquitin-protein ligase complex. The polypeptide is DDB1- and CUL4-associated factor 4 (DCAF4) (Bos taurus (Bovine)).